Consider the following 565-residue polypeptide: uncharacterized protein (565 aa).

This is an uncharacterized protein from Acanthamoeba polyphaga mimivirus (APMV).